A 342-amino-acid polypeptide reads, in one-letter code: RNA 3'-terminal phosphate cyclase (342 aa).

Belongs to the RNA 3'-terminal cyclase family. Type 1 subfamily.

Its subcellular location is the cytoplasm. The enzyme catalyses a 3'-end 3'-phospho-ribonucleotide-RNA + GTP = a 3'-end 2',3'-cyclophospho-ribonucleotide-RNA + GMP + diphosphate. Its activity is regulated as follows. Inhibited by GMP. In terms of biological role, catalyzes the GTP-dependent conversion of 3'-phosphate to a 2',3'-cyclic phosphodiester at the end of RNA. The biological role of this enzyme is unknown but it is likely to function in some aspects of cellular RNA processing. This Pyrococcus furiosus (strain ATCC 43587 / DSM 3638 / JCM 8422 / Vc1) protein is RNA 3'-terminal phosphate cyclase.